A 199-amino-acid polypeptide reads, in one-letter code: Pyridoxal 5'-phosphate synthase subunit PdxT (199 aa).

L-glutamine is bound at residue 47–49; that stretch reads GES. The active-site Nucleophile is C79. L-glutamine-binding positions include R106 and 133 to 134; that span reads IR. Active-site charge relay system residues include H169 and E171.

The protein belongs to the glutaminase PdxT/SNO family. In the presence of PdxS, forms a dodecamer of heterodimers. Only shows activity in the heterodimer.

It carries out the reaction aldehydo-D-ribose 5-phosphate + D-glyceraldehyde 3-phosphate + L-glutamine = pyridoxal 5'-phosphate + L-glutamate + phosphate + 3 H2O + H(+). The catalysed reaction is L-glutamine + H2O = L-glutamate + NH4(+). It functions in the pathway cofactor biosynthesis; pyridoxal 5'-phosphate biosynthesis. In terms of biological role, catalyzes the hydrolysis of glutamine to glutamate and ammonia as part of the biosynthesis of pyridoxal 5'-phosphate. The resulting ammonia molecule is channeled to the active site of PdxS. This Desulfitobacterium hafniense (strain DSM 10664 / DCB-2) protein is Pyridoxal 5'-phosphate synthase subunit PdxT.